The following is a 55-amino-acid chain: Small ribosomal subunit protein eS31 (55 aa).

Positions 21, 24, 39, and 42 each coordinate Zn(2+). Residues 21 to 42 (CPRCGPGVFLAEHADRFTCGRC) form a C4-type zinc finger.

The protein belongs to the eukaryotic ribosomal protein eS31 family. Part of the 30S ribosomal subunit. The cofactor is Zn(2+).

In Thermoplasma volcanium (strain ATCC 51530 / DSM 4299 / JCM 9571 / NBRC 15438 / GSS1), this protein is Small ribosomal subunit protein eS31.